The sequence spans 446 residues: ATP-dependent protease ATPase subunit HslU (446 aa).

Residues valine 18, 60-65, aspartate 259, glutamate 324, and arginine 396 contribute to the ATP site; that span reads GVGKTE.

Belongs to the ClpX chaperone family. HslU subfamily. A double ring-shaped homohexamer of HslV is capped on each side by a ring-shaped HslU homohexamer. The assembly of the HslU/HslV complex is dependent on binding of ATP.

It localises to the cytoplasm. In terms of biological role, ATPase subunit of a proteasome-like degradation complex; this subunit has chaperone activity. The binding of ATP and its subsequent hydrolysis by HslU are essential for unfolding of protein substrates subsequently hydrolyzed by HslV. HslU recognizes the N-terminal part of its protein substrates and unfolds these before they are guided to HslV for hydrolysis. The chain is ATP-dependent protease ATPase subunit HslU from Dechloromonas aromatica (strain RCB).